The sequence spans 554 residues: CTP synthase (554 aa).

An amidoligase domain region spans residues 1-270; it reads MTKFVFVTGG…DGLICDKLRL (270 aa). S13 is a binding site for CTP. S13 is a UTP binding site. Residues 14–19 and D71 each bind ATP; that span reads SLGKGI. The Mg(2+) site is built by D71 and E144. Residues 151 to 153, 191 to 196, and K227 each bind CTP; these read DIE and KTKPTQ. UTP-binding positions include 191–196 and K227; that span reads KTKPTQ. One can recognise a Glutamine amidotransferase type-1 domain in the interval 295 to 548; it reads TVAMVGKYVD…IAAAKARHQA (254 aa). G357 contacts L-glutamine. The active-site Nucleophile; for glutamine hydrolysis is the C384. Residues 385–388, E408, and R474 contribute to the L-glutamine site; that span reads LGMQ. Active-site residues include H521 and E523.

The protein belongs to the CTP synthase family. Homotetramer.

It catalyses the reaction UTP + L-glutamine + ATP + H2O = CTP + L-glutamate + ADP + phosphate + 2 H(+). The enzyme catalyses L-glutamine + H2O = L-glutamate + NH4(+). The catalysed reaction is UTP + NH4(+) + ATP = CTP + ADP + phosphate + 2 H(+). It participates in pyrimidine metabolism; CTP biosynthesis via de novo pathway; CTP from UDP: step 2/2. Allosterically activated by GTP, when glutamine is the substrate; GTP has no effect on the reaction when ammonia is the substrate. The allosteric effector GTP functions by stabilizing the protein conformation that binds the tetrahedral intermediate(s) formed during glutamine hydrolysis. Inhibited by the product CTP, via allosteric rather than competitive inhibition. Functionally, catalyzes the ATP-dependent amination of UTP to CTP with either L-glutamine or ammonia as the source of nitrogen. Regulates intracellular CTP levels through interactions with the four ribonucleotide triphosphates. The chain is CTP synthase from Verminephrobacter eiseniae (strain EF01-2).